We begin with the raw amino-acid sequence, 494 residues long: mRNA decay activator protein ZFP36L2 (494 aa).

Ser57 carries the post-translational modification Phosphoserine. Residues 93 to 113 are disordered; the sequence is GGPTSYGTLKEPSGGGGTALL. Ser125 is modified (phosphoserine). The RNA-binding signature appears at 153–158; that stretch reads RYKTEL. 2 consecutive C3H1-type zinc fingers follow at residues 153-181 and 191-219; these read RYKT…HGFH and KYKT…HNAD. The segment at 170 to 211 is RNA-binding; sequence YGEKCQFAHGFHELRSLTRHPKYKTELCRTFHTIGFCPYGPR. Phosphothreonine is present on Thr238. Disordered regions lie at residues 257-293 and 397-494; these read SLSF…PPSC and QQQQ…ISDD. Residues 406 to 415 show a composition bias toward pro residues; sequence PAQPPAPPSA. 2 stretches are compositionally biased toward low complexity: residues 416–435 and 459–478; these read TLPA…QLPR and YLSG…PSLD. A phosphoserine; by RPS6KA1 mark is found at Ser490 and Ser492.

Associates with the cytoplasmic CCR4-NOT deadenylase to trigger ARE-containing mRNA deadenylation and decay processes. Interacts with CNOT7; this interaction is inhibited in response to phorbol 12-myristate 13-acetate (PMA) treatment in a p38 MAPK-dependent manner. Interacts with CNOT6L. Phosphorylated by RPS6KA1 at Ser-490 and Ser-492 upon phorbol 12-myristate 13-acetate (PMA) treatment; this phosphorylation results in dissociation of the CCR4-NOT-deadenylase complex and induces p38 MAPK-mediated stabilization of the low-density lipoprotein (LDL) receptor (LDLR) mRNA. Phosphorylation occurs during early preadipocyte differentiation. As to expression, expressed mainly in the basal epidermal layer, weakly in the suprabasal epidermal layers. Expressed in epidermal keratinocytes (at protein level). Expressed in oocytes.

The protein localises to the nucleus. It is found in the cytoplasm. In terms of biological role, zinc-finger RNA-binding protein that destabilizes several cytoplasmic AU-rich element (ARE)-containing mRNA transcripts by promoting their poly(A) tail removal or deadenylation, and hence provide a mechanism for attenuating protein synthesis. Acts as a 3'-untranslated region (UTR) ARE mRNA-binding adapter protein to communicate signaling events to the mRNA decay machinery. Functions by recruiting the CCR4-NOT deadenylase complex and probably other components of the cytoplasmic RNA decay machinery to the bound ARE-containing mRNAs, and hence promotes ARE-mediated mRNA deadenylation and decay processes. Binds to 3'-UTR ARE of numerous mRNAs. Promotes ARE-containing mRNA decay of the low-density lipoprotein (LDL) receptor (LDLR) mRNA in response to phorbol 12-myristate 13-acetate (PMA) treatment in a p38 MAPK-dependent manner. Positively regulates early adipogenesis by promoting ARE-mediated mRNA decay of immediate early genes (IEGs). Plays a role in mature peripheral neuron integrity by promoting ARE-containing mRNA decay of the transcriptional repressor REST mRNA. Plays a role in ovulation and oocyte meiotic maturation by promoting ARE-mediated mRNA decay of the luteinizing hormone receptor LHCGR mRNA. Acts as a negative regulator of erythroid cell differentiation: promotes glucocorticoid-induced self-renewal of erythroid cells by binding mRNAs that are induced or highly expressed during terminal erythroid differentiation and promotes their degradation, preventing erythroid cell differentiation. In association with ZFP36L1 maintains quiescence on developing B lymphocytes by promoting ARE-mediated decay of several mRNAs encoding cell cycle regulators that help B cells progress through the cell cycle, and hence ensuring accurate variable-diversity-joining (VDJ) recombination process and functional immune cell formation. Together with ZFP36L1 is also necessary for thymocyte development and prevention of T-cell acute lymphoblastic leukemia (T-ALL) transformation by promoting ARE-mediated mRNA decay of the oncogenic transcription factor NOTCH1 mRNA. The polypeptide is mRNA decay activator protein ZFP36L2 (Homo sapiens (Human)).